We begin with the raw amino-acid sequence, 603 residues long: Thread biopolymer filament subunit gamma (603 aa).

The head stretch occupies residues 1–191 (MASHSSVSYR…ENETMEEELK (191 aa)). The 319-residue stretch at 158 to 476 (VKNILGTLNQ…KLLEGQELMV (319 aa)) folds into the IF rod domain. A coil 1A region spans residues 193–227 (LTGGVPMSPDSTVNLENVETQVTEMLTEVSNLTLE). The segment at 228–240 (RVRLEIDVDHLRA) is linker 1. Positions 241 to 341 (TADEIKSKYE…DALNVMREEY (101 aa)) are coil 1B. The interval 342 to 362 (QQVVTKNVQEAETYCKMQIDQ) is linker 12. A coil 2A region spans residues 363–381 (IQGISTQTTEQISILDKEI). A linker 2 region spans residues 382-389 (NTLEKELQ). Residues 390-510 (PLNVEYQRLL…SSVGYGASST (121 aa)) form a coil 2B region. The tail stretch occupies residues 511 to 603 (TLGAISGGYS…GHDSTIILQQ (93 aa)). Low complexity predominate over residues 562–587 (SSSGGHSMYSSSSMKRSSSKSASASA). Residues 562–603 (SSSGGHSMYSSSSMKRSSSKSASASAGGYGTSGHDSTIILQQ) form a disordered region.

Belongs to the intermediate filament family. As to quaternary structure, coiled-coil heterodimer of an alpha and a gamma subunit. Assemble into 10 nm filaments. Forms a massive, conical, intermediate filament biopolymer of approximately 60 cm.

It localises to the secreted. The protein resides in the extracellular space. Its function is as follows. Released extracellularly into seawater and provides physical and biological defense against invasive organism by modulation of the viscoelastic properties of mucus. In Eptatretus stoutii (Pacific hagfish), this protein is Thread biopolymer filament subunit gamma.